The primary structure comprises 395 residues: FAD-dependent urate hydroxylase (395 aa).

FAD contacts are provided by residues Gly-11, 30-31, Ser-43, and Met-125; that span reads ER. Substrate-binding positions include Asn-180, Arg-206, and 218–220; that span reads YFF. Residues Asp-287 and 297-301 each bind FAD; that span reads GQGGC.

Belongs to the FAD-dependent urate hydroxylase family. As to quaternary structure, monomer. Requires FAD as cofactor.

The catalysed reaction is urate + NADH + O2 + H(+) = 5-hydroxyisourate + NAD(+) + H2O. Its pathway is purine metabolism; urate degradation. Functionally, catalyzes the hydroxylation of urate to 5-hydroxyisourate (HIU). Is likely to be involved in the urate degradation pathway to allantoin. Prefers NADH over NADPH as the electron donor. This Mycolicibacterium vanbaalenii (strain DSM 7251 / JCM 13017 / BCRC 16820 / KCTC 9966 / NRRL B-24157 / PYR-1) (Mycobacterium vanbaalenii) protein is FAD-dependent urate hydroxylase.